Reading from the N-terminus, the 173-residue chain is uncharacterized protein (173 aa).

Residues 2 to 171 (VTVREAKLED…PDLSALKTLL (170 aa)) enclose the N-acetyltransferase domain.

The protein belongs to the acetyltransferase family.

This is an uncharacterized protein from Bacillus subtilis (strain 168).